The following is an 80-amino-acid chain: MGCVKSKKSAAEAAVGGAPGEKARLVGPEEARAPGAPQAGPVLLDYAQRLSEEIVVRAVQQWAELDRRYGDIPYIECDAP.

Residue G2 is the site of N-myristoyl glycine attachment.

Belongs to the small membrane AKAP family. May be palmitoylated at Cys-3.

The protein resides in the cell membrane. In terms of biological role, binds to type I regulatory subunits of protein kinase A and may anchor/target them to the plasma membrane. The chain is Small membrane A-kinase anchor protein from Tetraodon nigroviridis (Spotted green pufferfish).